The primary structure comprises 579 residues: Aspartate--tRNA(Asp/Asn) ligase (579 aa).

Residue Glu-171 coordinates L-aspartate. Positions 195-198 (QLFK) are aspartate. Residue Arg-217 participates in L-aspartate binding. Residues 217-219 (RDE) and Gln-226 contribute to the ATP site. His-444 contacts L-aspartate. Glu-475 serves as a coordination point for ATP. An L-aspartate-binding site is contributed by Arg-482. Residue 527–530 (GLDR) participates in ATP binding.

Belongs to the class-II aminoacyl-tRNA synthetase family. Type 1 subfamily. As to quaternary structure, homodimer.

It is found in the cytoplasm. The enzyme catalyses tRNA(Asx) + L-aspartate + ATP = L-aspartyl-tRNA(Asx) + AMP + diphosphate. Functionally, aspartyl-tRNA synthetase with relaxed tRNA specificity since it is able to aspartylate not only its cognate tRNA(Asp) but also tRNA(Asn). Reaction proceeds in two steps: L-aspartate is first activated by ATP to form Asp-AMP and then transferred to the acceptor end of tRNA(Asp/Asn). This Thermotoga maritima (strain ATCC 43589 / DSM 3109 / JCM 10099 / NBRC 100826 / MSB8) protein is Aspartate--tRNA(Asp/Asn) ligase.